Reading from the N-terminus, the 345-residue chain is Phosphoribosylformylglycinamidine cyclo-ligase (345 aa).

The protein belongs to the AIR synthase family.

Its subcellular location is the cytoplasm. It carries out the reaction 2-formamido-N(1)-(5-O-phospho-beta-D-ribosyl)acetamidine + ATP = 5-amino-1-(5-phospho-beta-D-ribosyl)imidazole + ADP + phosphate + H(+). It functions in the pathway purine metabolism; IMP biosynthesis via de novo pathway; 5-amino-1-(5-phospho-D-ribosyl)imidazole from N(2)-formyl-N(1)-(5-phospho-D-ribosyl)glycinamide: step 2/2. The polypeptide is Phosphoribosylformylglycinamidine cyclo-ligase (Lactobacillus acidophilus (strain ATCC 700396 / NCK56 / N2 / NCFM)).